Reading from the N-terminus, the 401-residue chain is Elongation factor Tu (401 aa).

The tr-type G domain maps to 10-211 (KPHLNVGTIG…ALDTFVPNPK (202 aa)). Positions 19–26 (GHVDHGKT) are G1. 19–26 (GHVDHGKT) lines the GTP pocket. A Mg(2+)-binding site is contributed by T26. The tract at residues 62 to 66 (GITIA) is G2. Positions 83–86 (DCPG) are G3. GTP contacts are provided by residues 83–87 (DCPGH) and 138–141 (NKAD). The interval 138–141 (NKAD) is G4. The segment at 179–181 (SAV) is G5.

The protein belongs to the TRAFAC class translation factor GTPase superfamily. Classic translation factor GTPase family. EF-Tu/EF-1A subfamily. As to quaternary structure, monomer.

It is found in the cytoplasm. The enzyme catalyses GTP + H2O = GDP + phosphate + H(+). Its function is as follows. GTP hydrolase that promotes the GTP-dependent binding of aminoacyl-tRNA to the A-site of ribosomes during protein biosynthesis. This chain is Elongation factor Tu, found in Leptospira borgpetersenii serovar Hardjo-bovis (strain JB197).